A 326-amino-acid chain; its full sequence is 3-oxopimeloyl-[acyl-carrier-protein] synthase (326 aa).

Active-site residues include C115 and H253. The tract at residues 254-258 (QANIR) is ACP-binding. Residue N283 is part of the active site.

It belongs to the thiolase-like superfamily. BioZ family.

It carries out the reaction malonyl-[ACP] + an acyl-CoA + H(+) = a 3-oxoacyl-[ACP] + CO2 + CoA. The enzyme catalyses glutaryl-CoA + malonyl-[ACP] + H(+) = 3-oxo-6-carboxyhexanoyl-[ACP] + CO2 + CoA. The protein operates within cofactor biosynthesis; biotin biosynthesis. In terms of biological role, involved in the formation of the biotin precursor pimeloyl-ACP. Catalyzes the condensation of glutaryl-CoA, an intermediate in lysine degradation, with malonyl-ACP to produce 3-oxopimeloyl-ACP. In Brucella abortus (strain 2308), this protein is 3-oxopimeloyl-[acyl-carrier-protein] synthase.